The chain runs to 169 residues: Small ribosomal subunit protein uS13c (169 aa).

The transit peptide at 1-47 (MAQMVAMPVAHSLSLICNWAKSNPLSRNTLALPASNTPNKQSLSIRC) directs the protein to the chloroplast.

It belongs to the universal ribosomal protein uS13 family. As to quaternary structure, part of the 30S ribosomal subunit.

The protein localises to the plastid. It localises to the chloroplast. Functionally, located at the top of the head of the 30S subunit, it contacts several helices of the 16S rRNA. The sequence is that of Small ribosomal subunit protein uS13c (RPS13) from Arabidopsis thaliana (Mouse-ear cress).